The chain runs to 450 residues: Phosphoglucosamine mutase (450 aa).

The active-site Phosphoserine intermediate is the Ser103. Mg(2+) is bound by residues Ser103, Asp243, Asp245, and Asp247. Ser103 carries the phosphoserine modification.

The protein belongs to the phosphohexose mutase family. Mg(2+) serves as cofactor. Post-translationally, activated by phosphorylation.

It catalyses the reaction alpha-D-glucosamine 1-phosphate = D-glucosamine 6-phosphate. Its function is as follows. Catalyzes the conversion of glucosamine-6-phosphate to glucosamine-1-phosphate. This is Phosphoglucosamine mutase from Lactobacillus delbrueckii subsp. bulgaricus (strain ATCC 11842 / DSM 20081 / BCRC 10696 / JCM 1002 / NBRC 13953 / NCIMB 11778 / NCTC 12712 / WDCM 00102 / Lb 14).